We begin with the raw amino-acid sequence, 301 residues long: E3 ubiquitin-protein ligase DIS1 (301 aa).

The RING-type; degenerate zinc finger occupies 53-89; it reads CPVCLSAMYPPIHQCSNGHTLCSGCKPRVHNRCPTCR. The SIAH-type; degenerate zinc-finger motif lies at 106–166; the sequence is SLELPCKYQN…LVNHLKDDHK (61 aa).

The protein belongs to the SINA (Seven in absentia) family. As to quaternary structure, homodimer. Interacts with NEK6. Interacts with SKIPA.

Its subcellular location is the nucleus. It is found in the cytoplasm. The catalysed reaction is S-ubiquitinyl-[E2 ubiquitin-conjugating enzyme]-L-cysteine + [acceptor protein]-L-lysine = [E2 ubiquitin-conjugating enzyme]-L-cysteine + N(6)-ubiquitinyl-[acceptor protein]-L-lysine.. Its pathway is protein modification; protein ubiquitination. In terms of biological role, E3 ubiquitin-protein ligase that mediates ubiquitination and subsequent proteasomal degradation of target proteins. E3 ubiquitin ligases accept ubiquitin from an E2 ubiquitin-conjugating enzyme in the form of a thioester and then directly transfers the ubiquitin to targeted substrates. Plays a negative role in drought stress tolerance through transcriptional and post-translational regulation of diverse stress-related genes. Interacts with the serine/threonine-protein kinase NEK6 and promotes its degradation via the 26S proteasome-dependent pathway. The protein is E3 ubiquitin-protein ligase DIS1 of Oryza sativa subsp. japonica (Rice).